The sequence spans 159 residues: 6,7-dimethyl-8-ribityllumazine synthase (159 aa).

5-amino-6-(D-ribitylamino)uracil is bound by residues Tyr-23, 58 to 60 (AYE), and 82 to 84 (TII). Residue His-90 is the Proton donor of the active site. Residue Ile-115 coordinates 5-amino-6-(D-ribitylamino)uracil. Arg-129 is a (2S)-2-hydroxy-3-oxobutyl phosphate binding site.

Belongs to the DMRL synthase family. As to quaternary structure, forms an icosahedral capsid composed of 60 subunits, arranged as a dodecamer of pentamers.

It carries out the reaction (2S)-2-hydroxy-3-oxobutyl phosphate + 5-amino-6-(D-ribitylamino)uracil = 6,7-dimethyl-8-(1-D-ribityl)lumazine + phosphate + 2 H2O + H(+). The protein operates within cofactor biosynthesis; riboflavin biosynthesis; riboflavin from 2-hydroxy-3-oxobutyl phosphate and 5-amino-6-(D-ribitylamino)uracil: step 1/2. Functionally, catalyzes the formation of 6,7-dimethyl-8-ribityllumazine by condensation of 5-amino-6-(D-ribitylamino)uracil with 3,4-dihydroxy-2-butanone 4-phosphate. This is the penultimate step in the biosynthesis of riboflavin. The protein is 6,7-dimethyl-8-ribityllumazine synthase of Buchnera aphidicola subsp. Baizongia pistaciae (strain Bp).